The primary structure comprises 357 residues: Neurogenic differentiation factor 1 (357 aa).

The tract at residues 1 to 94 is disordered; that stretch reads MTKSYSESGL…GPKKKKMTKA (94 aa). The segment covering 58 to 78 has biased composition (acidic residues); that stretch reads EEEEEDEDLEEEEEEEEEEED. Basic residues predominate over residues 81–93; sequence PKRRGPKKKKMTK. Residues 87-93 carry the Nuclear localization signal motif; that stretch reads KKKKMTK. Positions 101–153 constitute a bHLH domain; sequence LRRMKANARERNRMHGLNAALDNLRKVVPCYSKTQKLSKIETLRLAKNYIWAL. A phosphoserine mark is found at serine 162, serine 259, serine 266, and serine 274. Serine 336 carries the post-translational modification Phosphoserine; by CaMK2.

Efficient DNA-binding requires dimerization with another bHLH protein. Heterodimer with TCF3/E47; the heterodimer is inhibited in presence of ID2, but not NR0B2, to E-box element. Interacts with EP300; the interaction is inhibited by NR0B2. Interacts with RREB1. Interacts with ATOH8. In islet cells, phosphorylated on Ser-274 upon glucose stimulation; which may be required for nuclear localization. In activated neurons, phosphorylated on Ser-336; which promotes dendritic growth. Phosphorylated by MAPK1; phosphorylation regulates heterodimerization and DNA-binding activities. Phosphorylation on Ser-266 and Ser-274 increases transactivation on the insulin promoter in glucose-stimulated insulinoma cells. In terms of tissue distribution, expressed in pancreatic beta cells, pulmonary neuroendocrine cells and retinal interneurons amacrine cells (at protein level). Expressed in endocrine cells of the pancreas. Expressed in the inner layer of cerebellar external granular layer (EGL). Expressed in the Ammon's horn (AH), which includes the CA1-CA3 pyramidal layer and in granule cells of the dentate gyrus (DG). Expressed in photoreceptors of the outer nuclear layer (ONL), in a subset of cells in the lower half of the inner nuclear layer (INL), and in a subset of cells in the ganglion cell layer (GCL) of the retina. Expressed in cholinergic and AII amacrine cell types. Expressed in differentiating neurons of both the central and peripheral nervous systems.

It localises to the cytoplasm. The protein localises to the nucleus. In terms of biological role, acts as a transcriptional activator: mediates transcriptional activation by binding to E box-containing promoter consensus core sequences 5'-CANNTG-3'. Associates with the p300/CBP transcription coactivator complex to stimulate transcription of the secretin gene as well as the gene encoding the cyclin-dependent kinase inhibitor CDKN1A. Contributes to the regulation of several cell differentiation pathways, like those that promote the formation of early retinal ganglion cells, inner ear sensory neurons, granule cells forming either the cerebellum or the dentate gyrus cell layer of the hippocampus, endocrine islet cells of the pancreas and enteroendocrine cells of the small intestine. Together with PAX6 or SIX3, is required for the regulation of amacrine cell fate specification. Also required for dendrite morphogenesis and maintenance in the cerebellar cortex. Associates with chromatin to enhancer regulatory elements in genes encoding key transcriptional regulators of neurogenesis. The chain is Neurogenic differentiation factor 1 (Neurod1) from Mus musculus (Mouse).